The following is a 36-amino-acid chain: MKPRLCFNFRRRSISPCYISISYLLVAKLFKLFKIH.

It belongs to the POLARIS peptide family. In terms of tissue distribution, mostly expressed in the embryonic root from the heart stage and in the seedling primary and lateral root tips, especially in the columella initials and lateral root cap. Also detectable in aerial parts of the seedling, sepals and leaves, principally in vascular tissues of the lamina and petiole.

Required for correct root growth and vascular development, probably by modulating both cell division rate in meristems and cell elongation in roots. Negative regulator of the ethylene signaling pathway that modulates microtubule cytoskeleton dynamics and auxin transport and homeostasis, and possibly cytokinin signaling, thus influencing root growth and lateral root development. In Arabidopsis thaliana (Mouse-ear cress), this protein is Peptide POLARIS (PLS).